A 297-amino-acid polypeptide reads, in one-letter code: Cbb3-type cytochrome c oxidase subunit CcoP (297 aa).

At 1 to 35 (MSKKPTTKKEVQTTGHQWDGIEELNTPLPRWWLWT) the chain is on the cytoplasmic side. The chain crosses the membrane as a helical span at residues 36-56 (FYATIIWGVAYSIAMPAWPIF). The Periplasmic segment spans residues 57–297 (SDKATPGLLG…SYVHSLGGGQ (241 aa)). Cytochrome c domains follow at residues 108-199 (YTRN…LQIS) and 206-294 (VKAT…HSLG). Heme c-binding residues include Cys121, Cys124, His125, Met174, Cys219, Cys222, His223, and Met264.

The protein belongs to the CcoP / FixP family. Component of the cbb3-type cytochrome c oxidase at least composed of CcoN, CcoO, CcoQ and CcoP. Interacts with CcoQ. Heme c is required as a cofactor.

It localises to the cell inner membrane. Its pathway is energy metabolism; oxidative phosphorylation. Functionally, C-type cytochrome. Part of the cbb3-type cytochrome c oxidase complex. CcoP subunit is required for transferring electrons from donor cytochrome c via its heme groups to CcoO subunit. From there, electrons are shuttled to the catalytic binuclear center of CcoN subunit where oxygen reduction takes place. The complex also functions as a proton pump. This is Cbb3-type cytochrome c oxidase subunit CcoP from Rhodobacter capsulatus (Rhodopseudomonas capsulata).